A 588-amino-acid chain; its full sequence is Adenine deaminase (588 aa).

It belongs to the metallo-dependent hydrolases superfamily. Adenine deaminase family. In terms of assembly, homodimer. Requires Mn(2+) as cofactor.

The catalysed reaction is adenine + H2O + H(+) = hypoxanthine + NH4(+). The sequence is that of Adenine deaminase from Escherichia fergusonii (strain ATCC 35469 / DSM 13698 / CCUG 18766 / IAM 14443 / JCM 21226 / LMG 7866 / NBRC 102419 / NCTC 12128 / CDC 0568-73).